Here is a 94-residue protein sequence, read N- to C-terminus: MKRKIIVACGGAVATSTMAAEEIKELCQSHNIPVELIQCRVNEIETYMDGVHLICTTARVDRSFGDIPLVHGMPFVSGVGIEALQNKILTILQG.

One can recognise a PTS EIIB type-2 domain in the interval 1–94; sequence MKRKIIVACG…QNKILTILQG (94 aa). Cys-9 functions as the Phosphocysteine intermediate; for EIIB activity in the catalytic mechanism. Position 9 is a phosphocysteine; by EIIA (Cys-9).

In terms of assembly, forms a complex with one each of subunit of GatA, GatB and 2 subunits of GatC.

Its subcellular location is the cytoplasm. The catalysed reaction is galactitol(out) + N(pros)-phospho-L-histidyl-[protein] = galactitol 1-phosphate(in) + L-histidyl-[protein]. Functionally, the phosphoenolpyruvate-dependent sugar phosphotransferase system (PTS), a major carbohydrate active transport system, catalyzes the phosphorylation of incoming sugar substrates concomitant with their translocation across the cell membrane. The enzyme II complex composed of GatA, GatB and GatC is involved in galactitol transport. In Escherichia coli O157:H7, this protein is PTS system galactitol-specific EIIB component (gatB).